The following is a 149-amino-acid chain: Large ribosomal subunit protein bL9 (149 aa).

It belongs to the bacterial ribosomal protein bL9 family.

Binds to the 23S rRNA. In Histophilus somni (strain 129Pt) (Haemophilus somnus), this protein is Large ribosomal subunit protein bL9.